A 119-amino-acid polypeptide reads, in one-letter code: Flagellar transcriptional regulator FlhD (119 aa).

It belongs to the FlhD family. In terms of assembly, homodimer; disulfide-linked. Forms a heterohexamer composed of two FlhC and four FlhD subunits. Each FlhC binds a FlhD dimer, forming a heterotrimer, and a hexamer assembles by dimerization of two heterotrimers.

It localises to the cytoplasm. Functionally, functions in complex with FlhC as a master transcriptional regulator that regulates transcription of several flagellar and non-flagellar operons by binding to their promoter region. Activates expression of class 2 flagellar genes, including fliA, which is a flagellum-specific sigma factor that turns on the class 3 genes. Also regulates genes whose products function in a variety of physiological pathways. The polypeptide is Flagellar transcriptional regulator FlhD (Yersinia enterocolitica).